The primary structure comprises 491 residues: Stage IV sporulation protein A (491 aa).

The Walker A motif; involved in ATP-binding motif lies at 23–30 (GPVRTGKS). 23 to 30 (GPVRTGKS) contributes to the ATP binding site. A coiled-coil region spans residues 334–362 (QLLSLITRLSKVKNEYDKIESALIDAKIK).

In terms of assembly, interacts (via Walker A motif) with SipL (via C-terminus LysM domain).

It localises to the cytoplasm. The enzyme catalyses ATP + H2O = ADP + phosphate + H(+). ATPase. Has a role at an early stage in the morphogenesis of the spore coat and is required for proper coat localization to the forespore. In Clostridioides difficile (strain 630) (Peptoclostridium difficile), this protein is Stage IV sporulation protein A.